We begin with the raw amino-acid sequence, 177 residues long: Large ribosomal subunit protein uL6 (177 aa).

This sequence belongs to the universal ribosomal protein uL6 family. As to quaternary structure, part of the 50S ribosomal subunit.

Functionally, this protein binds to the 23S rRNA, and is important in its secondary structure. It is located near the subunit interface in the base of the L7/L12 stalk, and near the tRNA binding site of the peptidyltransferase center. The polypeptide is Large ribosomal subunit protein uL6 (Bordetella bronchiseptica (strain ATCC BAA-588 / NCTC 13252 / RB50) (Alcaligenes bronchisepticus)).